The chain runs to 461 residues: UDP-glucosyltransferase 1 (461 aa).

Belongs to the UDP-glycosyltransferase family.

The protein operates within secondary metabolite biosynthesis. Its function is as follows. UDP-glucosyltransferase; part of the pathway that mediates the biosynthesis of tenellin-type 2-pyridones, iron-chelating compounds involved in iron stress tolerance, competition with the natural competitor fungus Metarhizium robertsii and insect hosts infection. Targets the N-OH hydroxyl residue of 15-hydroxytellenin (15-HT) to produce pyridovericin-N-O-(beta-D-glucopyranoside) which is further methylated by the methyltransferase MT1 to yield pyridovericin-N-O-(4-O-methyl-beta-D-glucopyranoside) (PMGP). The pathway begins with the assembly of the polyketide-amino acid backbone by the hybrid PKS-NRPS tenS with the help of the enoyl reductase tenC. These enzymes catalyze the synthesis of the pyrrolidine-2-dione intermediates pretellinin A, 11-hydropretellenin A, 12-hydropretellenin A, 13-hydropretellenin A, 14-hydropretellenin A, 12-oxopretellenin A and prototellinin D. The cytochrome P450 monooxygenase tenA then catalyzes an oxidative ring expansion of pretenellin A and 14-hydropretellenin A to form the 2-pyridone core, leading to pretenellin B and pyridovericin, respectively. The cytochrome P450 monooxygenase tenB is then required for the selective N-hydroxylation of the 2-pyridone nitrogen of yield tellinin and 15-hydroxytellenin (15-HT), respectively. The UDP-glucosyltransferase GT1 and the methyltransferase MT1, located outside the tenS gene cluster, contribute to the stepwise glycosylation and methylation of 15-HT to obtain the glycoside pyridovericin-N-O-(4-O-methyl-beta-D-glucopyranoside) (PMGP). Additional related compounds such as 1-O-methyl-15-HT, (8Z)-1-O-methyl-15-HT, and O-methyltenellin A are also produced but the enzymes involved in their biosynthesis have still to be determined. The chain is UDP-glucosyltransferase 1 from Beauveria bassiana (strain ARSEF 2860) (White muscardine disease fungus).